We begin with the raw amino-acid sequence, 339 residues long: 1-aminocyclopropane-1-carboxylate deaminase (339 aa).

At lysine 52 the chain carries N6-(pyridoxal phosphate)lysine. Residue serine 79 is the Nucleophile of the active site.

The protein belongs to the ACC deaminase/D-cysteine desulfhydrase family. In terms of assembly, homotrimer. Pyridoxal 5'-phosphate serves as cofactor.

It carries out the reaction 1-aminocyclopropane-1-carboxylate + H2O = 2-oxobutanoate + NH4(+). Its function is as follows. Catalyzes a cyclopropane ring-opening reaction, the irreversible conversion of 1-aminocyclopropane-1-carboxylate (ACC) to ammonia and alpha-ketobutyrate. Allows growth on ACC as a nitrogen source. This Bradyrhizobium sp. (strain ORS 278) protein is 1-aminocyclopropane-1-carboxylate deaminase.